The primary structure comprises 1502 residues: Leucine-rich repeat-containing protein 9 (1502 aa).

LRR repeat units follow at residues 53 to 79 (FPNL…HFLK), 97 to 119 (CADL…LENL), 120 to 141 (LKLE…LDMM), 142 to 164 (QNLK…LDPN), 166 to 188 (QLER…NLAR), 224 to 247 (LQRL…TVVK), 296 to 320 (EHEL…KFHE), 699 to 721 (YSQI…ISRL), 722 to 744 (NGLR…SYLT), 746 to 764 (LEYL…GFKG), 765 to 790 (LGKL…ILRK), 792 to 814 (AIQL…VLKD), 822 to 849 (LTHL…RITQ), 894 to 916 (YTKI…LEKL), 917 to 938 (VNLR…LEHC), 939 to 960 (VNLE…LSKL), 961 to 983 (TKLR…VIES), 985 to 1009 (SHLH…GYKL), 1011 to 1030 (ELYL…SLKG), 1031 to 1053 (LNNL…NYRL), 1100 to 1123 (FTEL…PADH), 1124 to 1146 (FRNV…LIFL), 1147 to 1170 (PNIK…KSQS), 1209 to 1232 (MQSL…QLGR), 1234 to 1255 (RNLK…LENL), 1256 to 1278 (QFLR…SFAK), 1280 to 1301 (NSLV…LPPL), 1302 to 1325 (LKLR…KLEV), and 1327 to 1351 (PALV…LLVV). Residues 317-342 (KFHENNCDTEESNSQQSSERRKNNSD) form a disordered region. The span at 1479 to 1496 (TQQSGQARSQQKHPFNQE) shows a compositional bias: polar residues. The disordered stretch occupies residues 1479-1502 (TQQSGQARSQQKHPFNQENEGRCV).

The polypeptide is Leucine-rich repeat-containing protein 9 (lrrc9) (Xenopus tropicalis (Western clawed frog)).